Consider the following 253-residue polypeptide: Hydroxyacylglutathione hydrolase (253 aa).

Residues His59, His61, Asp63, His64, His118, Asp143, and His181 each contribute to the Zn(2+) site.

Belongs to the metallo-beta-lactamase superfamily. Glyoxalase II family. In terms of assembly, monomer. Requires Zn(2+) as cofactor.

The catalysed reaction is an S-(2-hydroxyacyl)glutathione + H2O = a 2-hydroxy carboxylate + glutathione + H(+). It participates in secondary metabolite metabolism; methylglyoxal degradation; (R)-lactate from methylglyoxal: step 2/2. Its function is as follows. Thiolesterase that catalyzes the hydrolysis of S-D-lactoyl-glutathione to form glutathione and D-lactic acid. This is Hydroxyacylglutathione hydrolase from Prochlorococcus marinus (strain MIT 9211).